The sequence spans 492 residues: Protein nucleotidyltransferase YdiU (492 aa).

Gly-91, Gly-93, Arg-94, Lys-114, Asp-126, Gly-127, Arg-180, and Arg-187 together coordinate ATP. The Proton acceptor role is filled by Asp-256. Asn-257 and Asp-266 together coordinate Mg(2+). An ATP-binding site is contributed by Asp-266.

It belongs to the SELO family. It depends on Mg(2+) as a cofactor. The cofactor is Mn(2+).

It catalyses the reaction L-seryl-[protein] + ATP = 3-O-(5'-adenylyl)-L-seryl-[protein] + diphosphate. It carries out the reaction L-threonyl-[protein] + ATP = 3-O-(5'-adenylyl)-L-threonyl-[protein] + diphosphate. The catalysed reaction is L-tyrosyl-[protein] + ATP = O-(5'-adenylyl)-L-tyrosyl-[protein] + diphosphate. The enzyme catalyses L-histidyl-[protein] + UTP = N(tele)-(5'-uridylyl)-L-histidyl-[protein] + diphosphate. It catalyses the reaction L-seryl-[protein] + UTP = O-(5'-uridylyl)-L-seryl-[protein] + diphosphate. It carries out the reaction L-tyrosyl-[protein] + UTP = O-(5'-uridylyl)-L-tyrosyl-[protein] + diphosphate. Functionally, nucleotidyltransferase involved in the post-translational modification of proteins. It can catalyze the addition of adenosine monophosphate (AMP) or uridine monophosphate (UMP) to a protein, resulting in modifications known as AMPylation and UMPylation. This chain is Protein nucleotidyltransferase YdiU, found in Synechococcus sp. (strain ATCC 27144 / PCC 6301 / SAUG 1402/1) (Anacystis nidulans).